We begin with the raw amino-acid sequence, 172 residues long: Adenine phosphoribosyltransferase (172 aa).

Belongs to the purine/pyrimidine phosphoribosyltransferase family. Homodimer.

It is found in the cytoplasm. It catalyses the reaction AMP + diphosphate = 5-phospho-alpha-D-ribose 1-diphosphate + adenine. The protein operates within purine metabolism; AMP biosynthesis via salvage pathway; AMP from adenine: step 1/1. Functionally, catalyzes a salvage reaction resulting in the formation of AMP, that is energically less costly than de novo synthesis. The chain is Adenine phosphoribosyltransferase from Herpetosiphon aurantiacus (strain ATCC 23779 / DSM 785 / 114-95).